We begin with the raw amino-acid sequence, 373 residues long: T-protein (373 aa).

A Chorismate mutase domain is found at 1–90; it reads MVAELTALRD…ESYSSENDKG (90 aa). The region spanning 99 to 361 is the Prephenate/arogenate dehydrogenase domain; it reads RPVVIVGGGG…DYAQRFQSES (263 aa).

It in the C-terminal section; belongs to the prephenate/arogenate dehydrogenase family.

It localises to the cytoplasm. The catalysed reaction is chorismate = prephenate. It carries out the reaction prephenate + NAD(+) = 3-(4-hydroxyphenyl)pyruvate + CO2 + NADH. The protein operates within amino-acid biosynthesis; L-tyrosine biosynthesis; (4-hydroxyphenyl)pyruvate from prephenate (NAD(+) route): step 1/1. Its pathway is metabolic intermediate biosynthesis; prephenate biosynthesis; prephenate from chorismate: step 1/1. In Escherichia coli (strain K12), this protein is T-protein (tyrA).